The primary structure comprises 506 residues: Apolipoprotein N-acyltransferase (506 aa).

6 consecutive transmembrane segments (helical) span residues Leu-24–Leu-44, Gly-58–His-78, Ala-85–Leu-105, Leu-125–Phe-145, Leu-162–Leu-182, and Lys-192–Leu-212. The 241-residue stretch at Met-230–Pro-470 folds into the CN hydrolase domain. Glu-269 functions as the Proton acceptor in the catalytic mechanism. Residue Lys-330 is part of the active site. Catalysis depends on Cys-382, which acts as the Nucleophile. A helical membrane pass occupies residues Ser-482–Ile-502.

Belongs to the CN hydrolase family. Apolipoprotein N-acyltransferase subfamily.

The protein resides in the cell inner membrane. The enzyme catalyses N-terminal S-1,2-diacyl-sn-glyceryl-L-cysteinyl-[lipoprotein] + a glycerophospholipid = N-acyl-S-1,2-diacyl-sn-glyceryl-L-cysteinyl-[lipoprotein] + a 2-acyl-sn-glycero-3-phospholipid + H(+). The protein operates within protein modification; lipoprotein biosynthesis (N-acyl transfer). Catalyzes the phospholipid dependent N-acylation of the N-terminal cysteine of apolipoprotein, the last step in lipoprotein maturation. This chain is Apolipoprotein N-acyltransferase, found in Pseudomonas syringae pv. tomato (strain ATCC BAA-871 / DC3000).